A 264-amino-acid polypeptide reads, in one-letter code: Apolipoprotein A-I (264 aa).

An N-terminal signal peptide occupies residues 1–18 (MKAVVLAVALVFLTGSQA). A run of 2 repeats spans residues 67–88 (LNLL…ERLG) and 89–110 (PLTR…QEMN). Positions 67-264 (LNLLENWDTL…DKARETLTAQ (198 aa)) are 10 X approximate tandem repeats. M109 is subject to Methionine sulfoxide. A 3; half-length repeat occupies 111-121 (KDLEEVKQNVQ). A run of 3 repeats spans residues 122 to 143 (PYLD…QRVA), 144 to 165 (PLGA…GKLS), and 166 to 187 (PVAE…TQLA). One copy of the 7; truncated repeat lies at 188-207 (PHSDKLRESLAQRLAELKSN). The stretch at 208–229 (PTLNEYHTRAKTHLNTFGEKAR) is repeat 8. A 9; half-length repeat occupies 230-240 (PALEDLRHTLI). Repeat 10 spans residues 241–264 (PILDTLKTKVKSVIDKARETLTAQ).

The protein belongs to the apolipoprotein A1/A4/E family. In terms of assembly, homodimer. Interacts with APOA1BP and CLU. Component of a sperm activating protein complex (SPAP), consisting of APOA1, an immunoglobulin heavy chain, an immunoglobulin light chain and albumin. Interacts with NDRG1. Interacts with SCGB3A2. Interacts with NAXE and YJEFN3. Glycosylated. In terms of processing, palmitoylated. Post-translationally, phosphorylation sites are present in the extracellular medium.

It localises to the secreted. Participates in the reverse transport of cholesterol from tissues to the liver for excretion by promoting cholesterol efflux from tissues and by acting as a cofactor for the lecithin cholesterol acyltransferase (LCAT). As part of the SPAP complex, activates spermatozoa motility. This is Apolipoprotein A-I (Apoa1) from Mus pahari (Gairdner's shrew-mouse).